A 343-amino-acid chain; its full sequence is RNA-binding protein 43 (343 aa).

In terms of domain architecture, RRM spans 15–90; sequence RTVVVSGLPV…PLLTVSHFSE (76 aa). Residues 170–200 form a disordered region; that stretch reads RRNWTGQNPRRVLQKNENSAPTLGTSVPEPA. Residues 184–194 show a composition bias toward polar residues; the sequence is KNENSAPTLGT.

The polypeptide is RNA-binding protein 43 (Rbm43) (Rattus norvegicus (Rat)).